A 617-amino-acid chain; its full sequence is DNA mismatch repair protein MutL (617 aa).

The protein belongs to the DNA mismatch repair MutL/HexB family.

This protein is involved in the repair of mismatches in DNA. It is required for dam-dependent methyl-directed DNA mismatch repair. May act as a 'molecular matchmaker', a protein that promotes the formation of a stable complex between two or more DNA-binding proteins in an ATP-dependent manner without itself being part of a final effector complex. In Bartonella tribocorum (strain CIP 105476 / IBS 506), this protein is DNA mismatch repair protein MutL.